The following is a 70-amino-acid chain: MPKQITEIKDFLVLARRKDAKIVKIKKNSLNVKFKVRCSRYLFTLVVNDKDKAEKLKQSLPPGIQVIELK.

This sequence belongs to the eukaryotic ribosomal protein eL38 family.

The chain is Large ribosomal subunit protein eL38 (rpl-38) from Ostertagia ostertagi (Brown stomach worm).